The primary structure comprises 159 residues: Cytochrome c-type biogenesis protein CcmE (159 aa).

The Cytoplasmic segment spans residues 1–8; the sequence is MNPRRKTR. The helical; Signal-anchor for type II membrane protein transmembrane segment at 9–29 threads the bilayer; the sequence is LWVALTVLAGLGLTMALVLYA. Topologically, residues 30 to 159 are periplasmic; that stretch reads LRANIDLFYT…PPQAYKDNRP (130 aa). Heme-binding residues include His130 and Tyr134. The disordered stretch occupies residues 130–159; sequence HDENYTPPEVKAAMDANHTRPPQAYKDNRP.

It belongs to the CcmE/CycJ family.

The protein localises to the cell inner membrane. Functionally, heme chaperone required for the biogenesis of c-type cytochromes. Transiently binds heme delivered by CcmC and transfers the heme to apo-cytochromes in a process facilitated by CcmF and CcmH. This chain is Cytochrome c-type biogenesis protein CcmE, found in Cronobacter sakazakii (strain ATCC BAA-894) (Enterobacter sakazakii).